The chain runs to 926 residues: Alpha-L-rhamnosidase (926 aa).

The N-terminal stretch at 1-25 is a signal peptide; it reads MILHKSVFKSYIYVLTYFVFFSVMS. Cys26 carries N-palmitoyl cysteine lipidation. A lipid anchor (S-diacylglycerol cysteine) is attached at Cys26. Residues Asp504, 508-510, Asp517, and Trp569 contribute to the alpha-L-rhamnose site; that span reads RDE. Catalysis depends on Glu510, which acts as the Proton donor. Glu779 serves as the catalytic Proton acceptor. Residue His800 coordinates alpha-L-rhamnose.

The protein belongs to the glycosyl hydrolase 78 family.

The protein resides in the cell membrane. The catalysed reaction is Hydrolysis of terminal non-reducing alpha-L-rhamnose residues in alpha-L-rhamnosides.. Its function is as follows. Alpha-L-rhamnosidase involved in ulvan degradation. Ulvan is the main polysaccharide component of the Ulvales (green seaweed) cell wall. It is composed of disaccharide building blocks comprising 3-sulfated rhamnose (Rha3S) linked to D-glucuronic acid (GlcA), L-iduronic acid (IduA), or D-xylose (Xyl). Alpha-L-rhamnosidase converts Rha-Xyl-Rha3S, the product of a sulfatase acting on Rha3S-Xyl-Rha3S oligosaccharides, to Rha and Xyl-Rha3S. The enzyme is able to degrade p-nitrophenyl-alpha-L-rhamnopyranoside (PNP-Rha) in vitro. The polypeptide is Alpha-L-rhamnosidase (Formosa agariphila (strain DSM 15362 / KCTC 12365 / LMG 23005 / KMM 3901 / M-2Alg 35-1)).